A 360-amino-acid chain; its full sequence is Peptide chain release factor 1 (360 aa).

An N5-methylglutamine modification is found at Q237.

It belongs to the prokaryotic/mitochondrial release factor family. In terms of processing, methylated by PrmC. Methylation increases the termination efficiency of RF1.

Its subcellular location is the cytoplasm. Peptide chain release factor 1 directs the termination of translation in response to the peptide chain termination codons UAG and UAA. The polypeptide is Peptide chain release factor 1 (Nitrosococcus oceani (strain ATCC 19707 / BCRC 17464 / JCM 30415 / NCIMB 11848 / C-107)).